Reading from the N-terminus, the 146-residue chain is Ribonuclease H (146 aa).

An RNase H type-1 domain is found at Glu4–Val145. 4 residues coordinate Mg(2+): Asp13, Glu51, Asp73, and Asp137.

This sequence belongs to the RNase H family. In terms of assembly, monomer. It depends on Mg(2+) as a cofactor.

It is found in the cytoplasm. The catalysed reaction is Endonucleolytic cleavage to 5'-phosphomonoester.. Endonuclease that specifically degrades the RNA of RNA-DNA hybrids. This is Ribonuclease H from Ehrlichia chaffeensis (strain ATCC CRL-10679 / Arkansas).